Here is a 345-residue protein sequence, read N- to C-terminus: UDP-3-O-acylglucosamine N-acyltransferase (345 aa).

Residue H248 is the Proton acceptor of the active site.

The protein belongs to the transferase hexapeptide repeat family. LpxD subfamily. Homotrimer.

The catalysed reaction is a UDP-3-O-[(3R)-3-hydroxyacyl]-alpha-D-glucosamine + a (3R)-hydroxyacyl-[ACP] = a UDP-2-N,3-O-bis[(3R)-3-hydroxyacyl]-alpha-D-glucosamine + holo-[ACP] + H(+). It participates in bacterial outer membrane biogenesis; LPS lipid A biosynthesis. In terms of biological role, catalyzes the N-acylation of UDP-3-O-acylglucosamine using 3-hydroxyacyl-ACP as the acyl donor. Is involved in the biosynthesis of lipid A, a phosphorylated glycolipid that anchors the lipopolysaccharide to the outer membrane of the cell. This is UDP-3-O-acylglucosamine N-acyltransferase from Trichodesmium erythraeum (strain IMS101).